Here is a 290-residue protein sequence, read N- to C-terminus: Putative tyrosine recombinase TTE1313 (290 aa).

The Core-binding (CB) domain occupies 1 to 85 (MAESVVGEFL…SIKAFYHYLF (85 aa)). Positions 106–290 (KEPVTLTVEQ…EVYNKFHPRA (185 aa)) constitute a Tyr recombinase domain. Arg-239 is a catalytic residue. The O-(3'-phospho-DNA)-tyrosine intermediate role is filled by Tyr-283.

It belongs to the 'phage' integrase family.

The protein localises to the cytoplasm. In terms of biological role, site-specific tyrosine recombinase, which acts by catalyzing the cutting and rejoining of the recombining DNA molecules. The protein is Putative tyrosine recombinase TTE1313 of Caldanaerobacter subterraneus subsp. tengcongensis (strain DSM 15242 / JCM 11007 / NBRC 100824 / MB4) (Thermoanaerobacter tengcongensis).